We begin with the raw amino-acid sequence, 4518 residues long: Dynein axonemal heavy chain 11 (4518 aa).

The tract at residues Met1–Gln1857 is stem. AAA stretches follow at residues Tyr1858–Val2079, Gln2139–Lys2368, Thr2474–Gly2721, and Asn2819–His3068. Residues Gly1896 to Thr1903, Gly2177 to Ser2184, Gly2512 to Thr2519, and Gly2857 to Gln2864 contribute to the ATP site. Residues Lys3074–Gln3405 are stalk. The stretch at Leu3322 to Lys3391 forms a coiled coil. 2 AAA regions span residues Leu3461–Arg3688 and Leu3898–Asn4124.

Belongs to the dynein heavy chain family. In terms of assembly, consists of at least two heavy chains and a number of intermediate and light chains. Interacts with CFAP45.

Its subcellular location is the cytoplasm. The protein localises to the cytoskeleton. The protein resides in the cilium axoneme. Its function is as follows. Force generating protein of respiratory cilia. Produces force towards the minus ends of microtubules. Dynein has ATPase activity; the force-producing power stroke is thought to occur on release of ADP. In Sus scrofa (Pig), this protein is Dynein axonemal heavy chain 11 (DNAH11).